The following is a 254-amino-acid chain: 5-oxoprolinase subunit A (254 aa).

Belongs to the LamB/PxpA family. Forms a complex composed of PxpA, PxpB and PxpC.

The catalysed reaction is 5-oxo-L-proline + ATP + 2 H2O = L-glutamate + ADP + phosphate + H(+). In terms of biological role, catalyzes the cleavage of 5-oxoproline to form L-glutamate coupled to the hydrolysis of ATP to ADP and inorganic phosphate. The sequence is that of 5-oxoprolinase subunit A from Burkholderia orbicola (strain MC0-3).